The following is a 394-amino-acid chain: Queuine tRNA-ribosyltransferase (394 aa).

Asp-99 serves as the catalytic Proton acceptor. Residues 99 to 103 (DSGGF), Asp-153, Gln-195, and Gly-222 contribute to the substrate site. The interval 253-259 (GVGHPED) is RNA binding. Residue Asp-272 is the Nucleophile of the active site. The segment at 277-281 (TRTGR) is RNA binding; important for wobble base 34 recognition. Positions 310, 312, 315, and 341 each coordinate Zn(2+).

The protein belongs to the queuine tRNA-ribosyltransferase family. As to quaternary structure, homodimer. Within each dimer, one monomer is responsible for RNA recognition and catalysis, while the other monomer binds to the replacement base PreQ1. Zn(2+) is required as a cofactor.

It catalyses the reaction 7-aminomethyl-7-carbaguanine + guanosine(34) in tRNA = 7-aminomethyl-7-carbaguanosine(34) in tRNA + guanine. It functions in the pathway tRNA modification; tRNA-queuosine biosynthesis. Its function is as follows. Catalyzes the base-exchange of a guanine (G) residue with the queuine precursor 7-aminomethyl-7-deazaguanine (PreQ1) at position 34 (anticodon wobble position) in tRNAs with GU(N) anticodons (tRNA-Asp, -Asn, -His and -Tyr). Catalysis occurs through a double-displacement mechanism. The nucleophile active site attacks the C1' of nucleotide 34 to detach the guanine base from the RNA, forming a covalent enzyme-RNA intermediate. The proton acceptor active site deprotonates the incoming PreQ1, allowing a nucleophilic attack on the C1' of the ribose to form the product. After dissociation, two additional enzymatic reactions on the tRNA convert PreQ1 to queuine (Q), resulting in the hypermodified nucleoside queuosine (7-(((4,5-cis-dihydroxy-2-cyclopenten-1-yl)amino)methyl)-7-deazaguanosine). The polypeptide is Queuine tRNA-ribosyltransferase (Deinococcus radiodurans (strain ATCC 13939 / DSM 20539 / JCM 16871 / CCUG 27074 / LMG 4051 / NBRC 15346 / NCIMB 9279 / VKM B-1422 / R1)).